The following is a 354-amino-acid chain: Uroporphyrinogen decarboxylase (354 aa).

Residues 27-31 (RQAGR), aspartate 77, tyrosine 154, threonine 209, and histidine 327 contribute to the substrate site.

This sequence belongs to the uroporphyrinogen decarboxylase family. In terms of assembly, homodimer.

It localises to the cytoplasm. The catalysed reaction is uroporphyrinogen III + 4 H(+) = coproporphyrinogen III + 4 CO2. Its pathway is porphyrin-containing compound metabolism; protoporphyrin-IX biosynthesis; coproporphyrinogen-III from 5-aminolevulinate: step 4/4. Its function is as follows. Catalyzes the decarboxylation of four acetate groups of uroporphyrinogen-III to yield coproporphyrinogen-III. The sequence is that of Uroporphyrinogen decarboxylase from Escherichia fergusonii (strain ATCC 35469 / DSM 13698 / CCUG 18766 / IAM 14443 / JCM 21226 / LMG 7866 / NBRC 102419 / NCTC 12128 / CDC 0568-73).